Reading from the N-terminus, the 344-residue chain is Glutamine synthetase (344 aa).

Residues 4-86 (YKLEYIWLDG…VMCEVMMPDG (83 aa)) enclose the GS beta-grasp domain. The GS catalytic domain occupies 89 to 344 (PHASNKRATI…SVPTEKKAVA (256 aa)). The Mg(2+) site is built by E109 and E111. E167 contributes to the ATP binding site. Mg(2+)-binding residues include E172 and E179. Residue E278 participates in L-glutamate binding.

It belongs to the glutamine synthetase family. As to quaternary structure, homooctamer and homotetramer. The cofactor is Mg(2+).

The protein localises to the cytoplasm. The enzyme catalyses L-glutamate + NH4(+) + ATP = L-glutamine + ADP + phosphate + H(+). Its function is as follows. Catalyzes the ATP-dependent biosynthesis of glutamine from glutamate and ammonia. In Bradyrhizobium diazoefficiens (strain JCM 10833 / BCRC 13528 / IAM 13628 / NBRC 14792 / USDA 110), this protein is Glutamine synthetase.